We begin with the raw amino-acid sequence, 518 residues long: 2-isopropylmalate synthase (518 aa).

In terms of domain architecture, Pyruvate carboxyltransferase spans Val5–Tyr267. Mn(2+) contacts are provided by Asp14, His202, His204, and Asn238. Residues Ser392–Asn518 are regulatory domain.

The protein belongs to the alpha-IPM synthase/homocitrate synthase family. LeuA type 1 subfamily. Homodimer. Requires Mn(2+) as cofactor.

The protein localises to the cytoplasm. The enzyme catalyses 3-methyl-2-oxobutanoate + acetyl-CoA + H2O = (2S)-2-isopropylmalate + CoA + H(+). The protein operates within amino-acid biosynthesis; L-leucine biosynthesis; L-leucine from 3-methyl-2-oxobutanoate: step 1/4. Its function is as follows. Catalyzes the condensation of the acetyl group of acetyl-CoA with 3-methyl-2-oxobutanoate (2-ketoisovalerate) to form 3-carboxy-3-hydroxy-4-methylpentanoate (2-isopropylmalate). In Buchnera aphidicola subsp. Rhopalosiphum padi, this protein is 2-isopropylmalate synthase.